The following is a 132-amino-acid chain: Probable histone H2A.2 (132 aa).

It belongs to the histone H2A family. The nucleosome is a histone octamer containing two molecules each of H2A, H2B, H3 and H4 assembled in one H3-H4 heterotetramer and two H2A-H2B heterodimers. The octamer wraps approximately 147 bp of DNA. Post-translationally, not ubiquitinated. Expressed mainly in non-dividing tissues of the plant. Also found in meristems and dividing cells.

The protein localises to the nucleus. It is found in the chromosome. In terms of biological role, core component of nucleosome. Nucleosomes wrap and compact DNA into chromatin, limiting DNA accessibility to the cellular machineries which require DNA as a template. Histones thereby play a central role in transcription regulation, DNA repair, DNA replication and chromosomal stability. DNA accessibility is regulated via a complex set of post-translational modifications of histones, also called histone code, and nucleosome remodeling. The chain is Probable histone H2A.2 from Arabidopsis thaliana (Mouse-ear cress).